We begin with the raw amino-acid sequence, 506 residues long: Aminoaldehyde dehydrogenase 2 (506 aa).

Aspartate 101 is a binding site for Na(+). Residues 161-163 (TPW) and 187-190 (KPSE) contribute to the NAD(+) site. Na(+) is bound at residue leucine 191. NAD(+)-binding positions include 241 to 244 (STET) and glutamate 262. The active-site Proton acceptor is the glutamate 262. Cysteine 297 serves as the catalytic Nucleophile. NAD(+) is bound by residues glutamate 396 and tryptophan 462.

Belongs to the aldehyde dehydrogenase family.

The catalysed reaction is 4-aminobutanal + NAD(+) + H2O = 4-aminobutanoate + NADH + 2 H(+). It carries out the reaction 3-aminopropanal + NAD(+) + H2O = beta-alanine + NADH + 2 H(+). The enzyme catalyses 4-(trimethylamino)butanal + NAD(+) + H2O = 4-(trimethylamino)butanoate + NADH + 2 H(+). It catalyses the reaction 4-guanidinobutanal + NAD(+) + H2O = 4-guanidinobutanoate + NADH + 2 H(+). It functions in the pathway amine and polyamine biosynthesis; betaine biosynthesis via choline pathway; betaine from betaine aldehyde: step 1/1. Functionally, dehydrogenase that catalyzes the oxidation of several aminoaldehydes. Metabolizes and detoxifies aldehyde products of polyamine degradation to non-toxic amino acids. Catalyzes the oxidation of 4-aminobutanal and 3-aminopropanal to 4-aminobutanoate and beta-alanine, respectively. Catalyzes the oxidation of 4-(trimethylamino)butanal and 4-guanidinobutanal to 4-trimethylammoniobutanoate and 4-guanidinobutanoate, respectively. The polypeptide is Aminoaldehyde dehydrogenase 2 (Zea mays (Maize)).